The sequence spans 383 residues: MRYISLLGATGSIGEQTLDVIRQHPDKFKLKAMTFGRNVDKAIPIIEQFQPEFVGCLSEEAYHTLKGHSFEYDVKMAAGDEANIEAAIYDAVDVVVNALVGSVGLVPTLKAIEQKKTIALANKETLVTAGHIVKEYAKTYDVPLLPVDSEHSAIFQCLQGEQAKNIERLIVTASGGSFRDKKRTELEGVTVEEALNHPNWSMGAKITIDSATMMNKGLEVIEAHWLFDIPYEQIDVLLHKESIIHSMVEFHDKSVMAQLGTPDMRVPIQYALTYPDRAPLPEAKSLNLWEIGQLNFQKADFDRYRCLHFAYESGKIGGTMPAVLNAANEMAVDAFLKGKVTFLQIEELIEKALNRHHVISTPSLQDIHEVDKETRDFVQSILT.

8 residues coordinate NADPH: Thr-10, Gly-11, Ser-12, Ile-13, Gly-36, Arg-37, Asn-38, and Asn-122. A 1-deoxy-D-xylulose 5-phosphate-binding site is contributed by Lys-123. Glu-124 is an NADPH binding site. Residue Asp-148 coordinates Mn(2+). 1-deoxy-D-xylulose 5-phosphate is bound by residues Ser-149, Glu-150, Ser-174, and His-197. Position 150 (Glu-150) interacts with Mn(2+). Gly-203 serves as a coordination point for NADPH. 1-deoxy-D-xylulose 5-phosphate contacts are provided by Ser-210, Asn-215, Lys-216, and Glu-219. Glu-219 contacts Mn(2+).

The protein belongs to the DXR family. The cofactor is Mg(2+). Requires Mn(2+) as cofactor.

It carries out the reaction 2-C-methyl-D-erythritol 4-phosphate + NADP(+) = 1-deoxy-D-xylulose 5-phosphate + NADPH + H(+). The protein operates within isoprenoid biosynthesis; isopentenyl diphosphate biosynthesis via DXP pathway; isopentenyl diphosphate from 1-deoxy-D-xylulose 5-phosphate: step 1/6. In terms of biological role, catalyzes the NADPH-dependent rearrangement and reduction of 1-deoxy-D-xylulose-5-phosphate (DXP) to 2-C-methyl-D-erythritol 4-phosphate (MEP). This Bacillus pumilus (strain SAFR-032) protein is 1-deoxy-D-xylulose 5-phosphate reductoisomerase.